A 101-amino-acid chain; its full sequence is Integration host factor subunit alpha (101 aa).

The segment at 49-70 (FGNFQLRDKPQRPGRNPKTGEE) is disordered.

The protein belongs to the bacterial histone-like protein family. Heterodimer of an alpha and a beta chain.

Its function is as follows. This protein is one of the two subunits of integration host factor, a specific DNA-binding protein that functions in genetic recombination as well as in transcriptional and translational control. The chain is Integration host factor subunit alpha from Nitrosospira multiformis (strain ATCC 25196 / NCIMB 11849 / C 71).